Reading from the N-terminus, the 335-residue chain is Mycobacterial beta-ketoacyl-[acyl-carrier-protein] synthase III (335 aa).

Residues cysteine 122 and histidine 258 contribute to the active site. Positions 259–263 (QANSR) are ACP-binding. Asparagine 289 is a catalytic residue.

The protein belongs to the thiolase-like superfamily. FabH family. In terms of assembly, homodimer.

It is found in the cytoplasm. It catalyses the reaction malonyl-[ACP] + dodecanoyl-CoA + H(+) = 3-oxotetradecanoyl-[ACP] + CO2 + CoA. It participates in lipid metabolism; fatty acid biosynthesis. It functions in the pathway lipid metabolism; mycolic acid biosynthesis. Catalyzes the condensation reaction of fatty acid synthesis by the addition to an acyl acceptor of two carbons from malonyl-ACP. Catalyzes the first condensation reaction which initiates fatty acid synthesis and may therefore play a role in governing the total rate of fatty acid production. Possesses both acetoacetyl-ACP synthase and acetyl transacylase activities. Its substrate specificity determines the biosynthesis of branched-chain and/or straight-chain of fatty acids. The polypeptide is Mycobacterial beta-ketoacyl-[acyl-carrier-protein] synthase III (Mycobacterium bovis (strain ATCC BAA-935 / AF2122/97)).